The chain runs to 195 residues: MDFQVVIFILCYLIGSIPFGFILSYVIGIGDIRKTGSGNIGATNVFRKNKKLALLTLLLDALKSFICVAIAQKYNIDNTILFLAALFAIIGHMFPVYLFFKGGKGVAPLLGSLIFIDYRVAVCFLTFWIICFLLCKYASLSSIVSTLIALLFICTCYTIVQSVIFTITALLIITQHTDNIIRMLNKSENKINLKL.

Transmembrane regions (helical) follow at residues 7–27 (IFIL…SYVI), 52–72 (LALL…AIAQ), 80–100 (ILFL…YLFF), 113–133 (LIFI…ICFL), and 147–167 (LIAL…IFTI).

Belongs to the PlsY family. As to quaternary structure, probably interacts with PlsX.

The protein resides in the cell inner membrane. It carries out the reaction an acyl phosphate + sn-glycerol 3-phosphate = a 1-acyl-sn-glycero-3-phosphate + phosphate. The protein operates within lipid metabolism; phospholipid metabolism. Catalyzes the transfer of an acyl group from acyl-phosphate (acyl-PO(4)) to glycerol-3-phosphate (G3P) to form lysophosphatidic acid (LPA). This enzyme utilizes acyl-phosphate as fatty acyl donor, but not acyl-CoA or acyl-ACP. This Ehrlichia ruminantium (strain Welgevonden) protein is Glycerol-3-phosphate acyltransferase.